The primary structure comprises 32 residues: MTSISDGQIVVALISAFIIVILASRLGKELYQ.

Residues 3–23 (SISDGQIVVALISAFIIVILA) form a helical membrane-spanning segment.

Belongs to the PsaM family.

Its subcellular location is the plastid. The protein resides in the chloroplast thylakoid membrane. This chain is Photosystem I reaction center subunit XII, found in Anthoceros angustus (Hornwort).